The chain runs to 320 residues: Cytochrome f (320 aa).

A signal peptide spans 1 to 35 (MQTRNAFSWIKKEITRSISVLLMIYIITRAPISNA). Positions 36, 56, 59, and 60 each coordinate heme. Residues 286–305 (VQGLLLFLASIILAQILLVL) traverse the membrane as a helical segment.

This sequence belongs to the cytochrome f family. As to quaternary structure, the 4 large subunits of the cytochrome b6-f complex are cytochrome b6, subunit IV (17 kDa polypeptide, petD), cytochrome f and the Rieske protein, while the 4 small subunits are PetG, PetL, PetM and PetN. The complex functions as a dimer. It depends on heme as a cofactor.

The protein localises to the plastid. The protein resides in the chloroplast thylakoid membrane. In terms of biological role, component of the cytochrome b6-f complex, which mediates electron transfer between photosystem II (PSII) and photosystem I (PSI), cyclic electron flow around PSI, and state transitions. The sequence is that of Cytochrome f (petA) from Pisum sativum (Garden pea).